The sequence spans 427 residues: Glutamate-1-semialdehyde 2,1-aminomutase (427 aa).

Lys265 is modified (N6-(pyridoxal phosphate)lysine).

Belongs to the class-III pyridoxal-phosphate-dependent aminotransferase family. HemL subfamily. In terms of assembly, homodimer. Pyridoxal 5'-phosphate is required as a cofactor.

Its subcellular location is the cytoplasm. It carries out the reaction (S)-4-amino-5-oxopentanoate = 5-aminolevulinate. It participates in porphyrin-containing compound metabolism; protoporphyrin-IX biosynthesis; 5-aminolevulinate from L-glutamyl-tRNA(Glu): step 2/2. The chain is Glutamate-1-semialdehyde 2,1-aminomutase from Burkholderia ambifaria (strain ATCC BAA-244 / DSM 16087 / CCUG 44356 / LMG 19182 / AMMD) (Burkholderia cepacia (strain AMMD)).